The primary structure comprises 176 residues: Cytochrome b (176 aa).

A run of 3 helical transmembrane segments spans residues 33–53 (FGSL…FLAM), 77–98 (WLLR…YLHI), and 113–133 (WNVG…GYVL). Heme b contacts are provided by His-83 and His-97.

The protein belongs to the cytochrome b family. As to quaternary structure, the cytochrome bc1 complex contains 11 subunits: 3 respiratory subunits (MT-CYB, CYC1 and UQCRFS1), 2 core proteins (UQCRC1 and UQCRC2) and 6 low-molecular weight proteins (UQCRH/QCR6, UQCRB/QCR7, UQCRQ/QCR8, UQCR10/QCR9, UQCR11/QCR10 and a cleavage product of UQCRFS1). This cytochrome bc1 complex then forms a dimer. It depends on heme b as a cofactor.

The protein localises to the mitochondrion inner membrane. In terms of biological role, component of the ubiquinol-cytochrome c reductase complex (complex III or cytochrome b-c1 complex) that is part of the mitochondrial respiratory chain. The b-c1 complex mediates electron transfer from ubiquinol to cytochrome c. Contributes to the generation of a proton gradient across the mitochondrial membrane that is then used for ATP synthesis. This is Cytochrome b (MT-CYB) from Nyctinomops aurispinosus (Peale's free-tailed bat).